The chain runs to 152 residues: Ribosome maturation factor RimP (152 aa).

The protein belongs to the RimP family.

Its subcellular location is the cytoplasm. Required for maturation of 30S ribosomal subunits. The chain is Ribosome maturation factor RimP from Shigella boydii serotype 4 (strain Sb227).